The primary structure comprises 537 residues: Probable quinate permease (537 aa).

The Cytoplasmic segment spans residues Met1–Tyr22. The helical transmembrane segment at Leu23–Gly43 threads the bilayer. The Extracellular segment spans residues Thr44–Ser74. The helical transmembrane segment at Leu75–Gly95 threads the bilayer. Over Arg96–Lys97 the chain is Cytoplasmic. The chain crosses the membrane as a helical span at residues Trp98–Asn118. Topologically, residues Gly119 to Arg130 are extracellular. The helical transmembrane segment at Val131–Leu151 threads the bilayer. Residues Ser152–Arg159 are Cytoplasmic-facing. A helical membrane pass occupies residues Leu160 to Tyr180. Residues Gly181–Trp193 are Extracellular-facing. The helical transmembrane segment at Ile194–Leu214 threads the bilayer. Over Lys215–Arg285 the chain is Cytoplasmic. A helical membrane pass occupies residues Leu286 to Tyr306. The Extracellular portion of the chain corresponds to Tyr307–Phe325. A helical transmembrane segment spans residues Thr326 to Ile346. Residues Asp347–Arg352 lie on the Cytoplasmic side of the membrane. A helical membrane pass occupies residues Leu353–Ile373. Residues Lys374 to Asp387 lie on the Extracellular side of the membrane. Residues Gly388–Trp408 traverse the membrane as a helical segment. Residues Asn409–Tyr456 are Cytoplasmic-facing. Residues Gly457–Ile477 traverse the membrane as a helical segment. Over Pro478–Ala537 the chain is Extracellular.

This sequence belongs to the major facilitator superfamily. Sugar transporter (TC 2.A.1.1) family. Interacts with creB. In terms of processing, ubiquitinated. Deubiquitinated by creB, probably to control its activity or amount.

Its subcellular location is the cell membrane. Functionally, integral membrane transporter that imports quinic acid to be catabolized as a carbon source. The polypeptide is Probable quinate permease (qutD) (Aspergillus flavus (strain ATCC 200026 / FGSC A1120 / IAM 13836 / NRRL 3357 / JCM 12722 / SRRC 167)).